A 60-amino-acid chain; its full sequence is Protein YmjC (60 aa).

The segment at His40–Arg60 is disordered.

In Escherichia coli (strain K12), this protein is Protein YmjC (ymjC).